A 132-amino-acid chain; its full sequence is Rubredoxin-1 (132 aa).

Residues 1-53 (MSRYQCPDCQYIYDENKGEPHEGFHPNTSWNDIPKDWACPDCAVRDKVDFIFL) form the Rubredoxin-like domain. Residues cysteine 6, cysteine 9, cysteine 39, and cysteine 42 each contribute to the Fe cation site. A disordered region spans residues 108–132 (TEVLDQASTPQVVRKSSTRKKMRNK). The segment covering 113 to 122 (QASTPQVVRK) has biased composition (polar residues). Over residues 123–132 (SSTRKKMRNK) the composition is skewed to basic residues.

The protein belongs to the rubredoxin family. It depends on Fe(3+) as a cofactor.

The protein resides in the cytoplasm. The protein operates within hydrocarbon metabolism; alkane degradation. Its function is as follows. Not known. Probably involved in an electron transport pathway, but not required for the hydrocarbon hydroxylating system. Seems to be non-functional. This is Rubredoxin-1 (alkF) from Ectopseudomonas oleovorans (Pseudomonas oleovorans).